Consider the following 283-residue polypeptide: Thymidylate synthase (283 aa).

Residue Arg-22 coordinates dUMP. The Nucleophile role is filled by Cys-160. DUMP contacts are provided by residues 180–183 (RSCD), Asn-191, and 221–223 (HIY). Residue Asp-183 coordinates (6R)-5,10-methylene-5,6,7,8-tetrahydrofolate. A (6R)-5,10-methylene-5,6,7,8-tetrahydrofolate-binding site is contributed by Ser-282.

It belongs to the thymidylate synthase family. Bacterial-type ThyA subfamily. As to quaternary structure, homodimer.

The protein localises to the cytoplasm. It catalyses the reaction dUMP + (6R)-5,10-methylene-5,6,7,8-tetrahydrofolate = 7,8-dihydrofolate + dTMP. It participates in pyrimidine metabolism; dTTP biosynthesis. Catalyzes the reductive methylation of 2'-deoxyuridine-5'-monophosphate (dUMP) to 2'-deoxythymidine-5'-monophosphate (dTMP) while utilizing 5,10-methylenetetrahydrofolate (mTHF) as the methyl donor and reductant in the reaction, yielding dihydrofolate (DHF) as a by-product. This enzymatic reaction provides an intracellular de novo source of dTMP, an essential precursor for DNA biosynthesis. This chain is Thymidylate synthase, found in Vibrio vulnificus (strain YJ016).